The chain runs to 304 residues: Phospholipase A1 (304 aa).

A disulfide bond links Cys6 and Cys90. The N-linked (GlcNAc...) asparagine glycan is linked to Asn61. Ser140 functions as the Nucleophile in the catalytic mechanism. Asp168 acts as the Charge relay system in catalysis. 2 disulfides stabilise this stretch: Cys179/Cys184 and Cys222/Cys231. The active-site Charge relay system is His233. Disulfide bonds link Cys248–Cys272, Cys249–Cys297, and Cys265–Cys270.

The protein belongs to the AB hydrolase superfamily. Lipase family. Expressed by the venom gland.

Its subcellular location is the secreted. It catalyses the reaction a 1,2-diacyl-sn-glycero-3-phosphocholine + H2O = a 2-acyl-sn-glycero-3-phosphocholine + a fatty acid + H(+). Its function is as follows. Catalyzes the hydrolysis of phosphatidylcholine with phospholipase A1 activity. May act as an allergen and induce hemolytic activity. This chain is Phospholipase A1, found in Vespa velutina (Asian yellow-legged hornet).